The primary structure comprises 96 residues: U-stichotoxin-Hau2b (96 aa).

The N-terminal stretch at 1-18 (MKPIFIVALLFSTCLVNA) is a signal peptide. 2 consecutive propeptides follow at residues 19–29 (KPSIDDAEMKR) and 30–33 (EPKP). 2 disulfides stabilise this stretch: C40-C51 and C43-C58. 2 consecutive propeptides follow at residues 62-64 (RKR) and 65-68 (EPKP). 2 cysteine pairs are disulfide-bonded: C75/C86 and C78/C93.

This sequence belongs to the sea anemone BBH family.

It localises to the secreted. The protein localises to the nematocyst. Its function is as follows. Neurotoxin that paralyzes freshwater crabs at high concentration. The sequence is that of U-stichotoxin-Hau2b from Heteractis aurora (Banded sea anemone).